Here is a 365-residue protein sequence, read N- to C-terminus: Caffeic acid 3-O-methyltransferase (365 aa).

Position 133 (N133) interacts with (E)-ferulate. 6 residues coordinate S-adenosyl-L-homocysteine: G210, D233, D253, M254, M266, and K267. Residue H271 is the Proton acceptor of the active site. D272 contacts (E)-5-hydroxyferulate.

Belongs to the class I-like SAM-binding methyltransferase superfamily. Cation-independent O-methyltransferase family. COMT subfamily. In terms of assembly, homodimer.

The enzyme catalyses (E)-caffeate + S-adenosyl-L-methionine = (E)-ferulate + S-adenosyl-L-homocysteine + H(+). The catalysed reaction is (E)-5-hydroxyferulate + S-adenosyl-L-methionine = (E)-sinapate + S-adenosyl-L-homocysteine + H(+). The protein operates within aromatic compound metabolism; phenylpropanoid biosynthesis. Inhibited by Cu(2+), and to a lesser extent by Ni(2+), Mn(2+), Co(2+), Fe(3+) and Zn(2+). Unaffected by Fe(2+) and Mg(2+). In terms of biological role, catalyzes the conversion of caffeic acid to ferulic acid and of 5-hydroxyferulic acid to sinapic acid. The resulting products may subsequently be converted to the corresponding alcohols that are incorporated into lignins. The sequence is that of Caffeic acid 3-O-methyltransferase from Ammi majus (Bishop's weed).